The sequence spans 267 residues: MADS-box transcription factor 15 (267 aa).

An MADS-box domain is found at M1–S61. Residues E88–N178 enclose the K-box domain. A disordered region spans residues V179 to D215. Over residues Q182–D215 the composition is skewed to low complexity.

In terms of assembly, may interact with the K-box of MADS1 and MADS6.

The protein resides in the nucleus. Functionally, probable transcription factor. This Oryza sativa subsp. japonica (Rice) protein is MADS-box transcription factor 15 (MADS15).